A 98-amino-acid chain; its full sequence is UPF0175 protein VNG_0066H (98 aa).

It belongs to the UPF0175 family.

In Halobacterium salinarum (strain ATCC 700922 / JCM 11081 / NRC-1) (Halobacterium halobium), this protein is UPF0175 protein VNG_0066H.